The following is a 90-amino-acid chain: DNA/RNA-binding protein Alba (90 aa).

Residue K8 is modified to N6-acetyllysine.

The protein belongs to the histone-like Alba family. Post-translationally, acetylated. Acetylation at Lys-8 decreases DNA-binding affinity.

The protein resides in the cytoplasm. It localises to the chromosome. In terms of biological role, binds double-stranded DNA tightly but without sequence specificity. Involved in DNA compaction. This chain is DNA/RNA-binding protein Alba, found in Nanoarchaeum equitans (strain Kin4-M).